The chain runs to 411 residues: 2,3-bisphosphoglycerate-independent phosphoglycerate mutase 1 (411 aa).

It belongs to the BPG-independent phosphoglycerate mutase family. A-PGAM subfamily. Homotetramer. The cofactor is Mg(2+).

It carries out the reaction (2R)-2-phosphoglycerate = (2R)-3-phosphoglycerate. It functions in the pathway carbohydrate degradation; glycolysis; pyruvate from D-glyceraldehyde 3-phosphate: step 3/5. Inhibited to approximately 20% by EDTA. Functionally, catalyzes the interconversion of 2-phosphoglycerate and 3-phosphoglycerate. In Methanocaldococcus jannaschii (strain ATCC 43067 / DSM 2661 / JAL-1 / JCM 10045 / NBRC 100440) (Methanococcus jannaschii), this protein is 2,3-bisphosphoglycerate-independent phosphoglycerate mutase 1 (apgM1).